The primary structure comprises 251 residues: Auxin-responsive protein IAA29 (251 aa).

The short motif at 3–7 (LDLGL) is the EAR-like (transcriptional repression) element. The region spanning 159–246 (SMYVKVKMDG…SIIRDRPCAY (88 aa)) is the PB1 domain.

This sequence belongs to the Aux/IAA family. In terms of assembly, homodimers and heterodimers.

The protein localises to the nucleus. Functionally, aux/IAA proteins are short-lived transcriptional factors that function as repressors of early auxin response genes at low auxin concentrations. Repression is thought to result from the interaction with auxin response factors (ARFs), proteins that bind to the auxin-responsive promoter element (AuxRE). Formation of heterodimers with ARF proteins may alter their ability to modulate early auxin response genes expression. In Arabidopsis thaliana (Mouse-ear cress), this protein is Auxin-responsive protein IAA29 (IAA29).